Reading from the N-terminus, the 323-residue chain is GTP 3',8-cyclase (323 aa).

The 230-residue stretch at 4-233 (KYGREIDYLR…NGPAKYISIE (230 aa)) folds into the Radical SAM core domain. Position 13 (R13) interacts with GTP. C20 and C24 together coordinate [4Fe-4S] cluster. Y26 is an S-adenosyl-L-methionine binding site. C27 provides a ligand contact to [4Fe-4S] cluster. R63 is a GTP binding site. Residue G67 coordinates S-adenosyl-L-methionine. T94 lines the GTP pocket. S118 is an S-adenosyl-L-methionine binding site. K154 provides a ligand contact to GTP. S-adenosyl-L-methionine is bound at residue M188. Residues C250 and C253 each coordinate [4Fe-4S] cluster. Position 255-257 (255-257 (RIR)) interacts with GTP. C267 serves as a coordination point for [4Fe-4S] cluster.

The protein belongs to the radical SAM superfamily. MoaA family. Monomer and homodimer. [4Fe-4S] cluster serves as cofactor.

It catalyses the reaction GTP + AH2 + S-adenosyl-L-methionine = (8S)-3',8-cyclo-7,8-dihydroguanosine 5'-triphosphate + 5'-deoxyadenosine + L-methionine + A + H(+). The protein operates within cofactor biosynthesis; molybdopterin biosynthesis. Catalyzes the cyclization of GTP to (8S)-3',8-cyclo-7,8-dihydroguanosine 5'-triphosphate. This is GTP 3',8-cyclase from Clostridium perfringens (strain 13 / Type A).